The sequence spans 214 residues: LOB domain-containing protein 7 (214 aa).

The LOB domain occupies 12–113; the sequence is TACAACKHQR…TELNLTRQQI (102 aa).

Belongs to the LOB domain-containing protein family.

The chain is LOB domain-containing protein 7 (LBD7) from Arabidopsis thaliana (Mouse-ear cress).